A 142-amino-acid polypeptide reads, in one-letter code: Sec-independent protein translocase protein TatB (142 aa).

Residues 2 to 22 (FANVGWGEMLVLVIAGLVILG) traverse the membrane as a helical segment. Positions 89-142 (DDSIFTGKFDQNGKSEKPEQKPEKPQSAPGPAAAVPDQPAGGRSGSTPYDTDAT) are disordered. Basic and acidic residues predominate over residues 99–112 (QNGKSEKPEQKPEK). Over residues 133 to 142 (GSTPYDTDAT) the composition is skewed to polar residues.

It belongs to the TatB family. As to quaternary structure, the Tat system comprises two distinct complexes: a TatABC complex, containing multiple copies of TatA, TatB and TatC subunits, and a separate TatA complex, containing only TatA subunits. Substrates initially bind to the TatABC complex, which probably triggers association of the separate TatA complex to form the active translocon.

The protein resides in the cell membrane. Part of the twin-arginine translocation (Tat) system that transports large folded proteins containing a characteristic twin-arginine motif in their signal peptide across membranes. Together with TatC, TatB is part of a receptor directly interacting with Tat signal peptides. TatB may form an oligomeric binding site that transiently accommodates folded Tat precursor proteins before their translocation. This Mycolicibacterium vanbaalenii (strain DSM 7251 / JCM 13017 / BCRC 16820 / KCTC 9966 / NRRL B-24157 / PYR-1) (Mycobacterium vanbaalenii) protein is Sec-independent protein translocase protein TatB.